The primary structure comprises 344 residues: Protein POLAR LOCALIZATION DURING ASYMMETRIC DIVISION AND REDISTRIBUTION (344 aa).

At threonine 19 the chain carries Phosphothreonine; by ASK7. Serine 79 is subject to Phosphoserine; by ASK7. Phosphothreonine; by ASK7 occurs at positions 84 and 86. Residues serine 91 and serine 94 each carry the phosphoserine; by ASK7 modification. A phosphothreonine; by ASK7 mark is found at threonine 193, threonine 217, and threonine 233. Serine 235 is modified (phosphoserine; by ASK7). Residues 262–297 (LETRQQEELVKLETALNRVERRLQEKETEVSWWKDA) are a coiled coil. 5 positions are modified to phosphoserine; by ASK7: serine 308, serine 309, serine 320, serine 321, and serine 336.

Component of a complex made of POLAR, BASL, ASK7/BIN2 and ASK3/SK12. Interacts with BASL, ASK7/BIN2 and ASK3/SK12. Phosphorylation by ASK7/BIN2 is increases turnover. As to expression, expressed in stomatal lineage cells with asymmetric division potential.

It localises to the cytoplasm. The protein localises to the cell cortex. Functionally, regulates asymmetric cell division (ACD), especially in stomatal-lineage cells. Acts as a stomatal lineage scaffold which regulates subcellular localization and transient polarization of kinases (e.g. ASK7/BIN2 and ASK3/SK12) involved in ACD in a BASL-dependent manner. Promotes the differentiation of both pavement cells and stomata. The polypeptide is Protein POLAR LOCALIZATION DURING ASYMMETRIC DIVISION AND REDISTRIBUTION (Arabidopsis thaliana (Mouse-ear cress)).